The following is a 1024-amino-acid chain: E3 ISG15--protein ligase HERC5 (1024 aa).

A compositionally biased stretch (basic residues) spans 1–13 (MERRSRRKSRRNG). Residues 1–28 (MERRSRRKSRRNGRSTAGKAAATQPAKS) are disordered. RCC1 repeat units follow at residues 96–155 (NMKI…ALSK), 156–208 (GGEL…ALSM), 209–260 (SGNI…LLTQ), 262–312 (GLLF…AYVS), and 314–364 (LGKV…LIMI). The 323-residue stretch at 702-1024 (ENEDLRKELW…EAINNNRGFG (323 aa)) folds into the HECT domain. Cys-994 (glycyl thioester intermediate) is an active-site residue.

(Microbial infection) Interacts with human cytomegalovirus protein UL26; this interaction inhibits global protein ISGylation. As to quaternary structure, (Microbial infection) Interacts with Kaposi's sarcoma-associated herpesvirus protein v-IRF1; this interaction inhibits global protein ISGylation. In terms of assembly, binds to CCNA1, CCNB1, CCND1 and CCNE1. Interacts with UBE2L6. Interacts with IRF3, this interaction is marginal in resting cells but enhanced upon viral infection. Interacts with influenza A virus NS1. Post-translationally, ISGylated. In terms of tissue distribution, expressed in testis and to a lesser degree in brain, ovary and placenta. Found in most tissues at low levels.

The protein resides in the cytoplasm. It localises to the perinuclear region. Major E3 ligase for ISG15 conjugation. Acts as a positive regulator of innate antiviral response in cells induced by interferon. Functions as part of the ISGylation machinery that recognizes target proteins in a broad and relatively non-specific manner. Catalyzes ISGylation of IRF3 which results in sustained activation, it attenuates IRF3-PIN1 interaction, which antagonizes IRF3 ubiquitination and degradation, and boosts the antiviral response. Mediates ISGylation of the phosphatase PTEN leading to its degradation, thus alleviating its suppression of the PI3K-AKT signaling pathway and promoting the production of cytokines that facilitate bacterial clearance. Interferes with the function of key viral structural proteins such as ebolavirus structural protein VP40 or HIV-1 protein GAG. Catalyzes ISGylation of influenza A viral NS1 which attenuates virulence; ISGylated NS1 fails to form homodimers and thus to interact with its RNA targets. Catalyzes ISGylation of papillomavirus type 16 L1 protein which results in dominant-negative effect on virus infectivity. Physically associated with polyribosomes, broadly modifies newly synthesized proteins in a cotranslational manner. In an interferon-stimulated cell, newly translated viral proteins are primary targets of ISG15. Promotes parkin/PRKN ubiquitin E3 ligase activity by suppressing the intramolecular interaction that maintains its autoinhibited conformation. Its function is as follows. (Microbial infection) Functions as an E3 ligase for ISGylation of hepatitis B virus protein X leading to enhanced viral replication due to increased interferon resistance. The chain is E3 ISG15--protein ligase HERC5 (HERC5) from Homo sapiens (Human).